A 462-amino-acid chain; its full sequence is MGGCISKTSWSNEEPMHRPCLGMGCCGSKMGKRGFSDRMVSLHNLVSIPNRIIGNGKSRSSCIFTQQGRKGINQDAMIVWEDFMSKDVTFCGVFDGHGPHGHLVARKVRDSLPVKLLSLLNSIKSKQNGPIGTRASKSDSLEAEKEESTEEDKLNFLWEEAFLKSFNAMDKELRSHPNLECFCSGCTAVTIIKQGSNLYMGNIGDSRAILGSKDSNDSMIAVQLTVDLKPDLPREAERIKQCKGRVFALQDEPEVSRVWLPFDNAPGLAMARAFGDFCLKDYGVISIPEFSHRVLTDRDQFIVLASDGVWDVLSNEEVVEVVASATSRASAARLVVDSAVREWKLKYPTSKMDDCAVVCLFLDGRMDSETSDNEEQCFSSATNAVESDESQGAEPCLQRNVTVRSLSTDQENNSYGKVIAEADNAEKEKTREGEQNWSGLEGVTRVNSLVQLPRFPGEEPKT.

Residues 60–362 (SSCIFTQQGR…DDCAVVCLFL (303 aa)) enclose the PPM-type phosphatase domain. Mn(2+) is bound by residues Asp-95, Gly-96, Asp-307, and Asp-353. Disordered stretches follow at residues 369–394 (ETSD…QGAE) and 421–443 (EADN…LEGV). Residues 376–385 (QCFSSATNAV) are compositionally biased toward polar residues. Residues 424–434 (NAEKEKTREGE) are compositionally biased toward basic and acidic residues.

It belongs to the PP2C family. As to quaternary structure, interacts with GCN5. Mg(2+) is required as a cofactor. The cofactor is Mn(2+).

The catalysed reaction is O-phospho-L-seryl-[protein] + H2O = L-seryl-[protein] + phosphate. The enzyme catalyses O-phospho-L-threonyl-[protein] + H2O = L-threonyl-[protein] + phosphate. Its function is as follows. May act as negative regulator of GCN5. The protein is Probable protein phosphatase 2C 1 (PPC6-6) of Arabidopsis thaliana (Mouse-ear cress).